Consider the following 304-residue polypeptide: Phytol kinase 1, chloroplastic (304 aa).

The N-terminal 59 residues, 1–59, are a transit peptide targeting the chloroplast; the sequence is MAATLPLSPINHQLCRFGNNSLTTHRFCSPGFLISSPCFIGLTGMGSATQLRARRSLIS. The next 6 membrane-spanning stretches (helical) occupy residues 71–91, 105–125, 129–149, 167–187, 191–211, and 227–247; these read VGAT…FESL, LVHI…SGST, YFAA…GLSI, ELLK…VFFW, PIGM…DIMG, and WAGS…LLYY.

It belongs to the polyprenol kinase family.

Its subcellular location is the plastid. It is found in the chloroplast membrane. It carries out the reaction phytol + CTP = phytyl phosphate + CDP + H(+). It participates in cofactor biosynthesis; tocopherol biosynthesis. Kinase involved in the activation and reutilization of phytol from chlorophyll degradation in plant metabolism, including tocopherol biosynthesis. Catalyzes the conversion of phytol to phytol monophosphate (PMP) in the presence of CTP or UTP. No activity with ATP or GTP as phosphoryl donor. The chain is Phytol kinase 1, chloroplastic from Arabidopsis thaliana (Mouse-ear cress).